Reading from the N-terminus, the 458-residue chain is F-box/LRR-repeat protein At5g02910 (458 aa).

Residues 10–56 (MDFISSLPDEILHHILSSVPTKSAIRTSLLSKRWRYVWSETPSLSID) enclose the F-box domain. 8 LRR repeats span residues 57–84 (CRRA…HLHT), 86–112 (LLNR…SLES), 133–161 (KQLF…LSLS), 162–187 (NCTL…ELLY), 226–251 (CLRL…DLNI), 260–285 (TAGF…TIGG), 325–353 (KLLR…HLND), and 389–414 (ESNL…VVLL).

The sequence is that of F-box/LRR-repeat protein At5g02910 from Arabidopsis thaliana (Mouse-ear cress).